Reading from the N-terminus, the 367-residue chain is tRNA 2-selenouridine synthase (367 aa).

In terms of domain architecture, Rhodanese spans 12 to 136; sequence FLNDRPLMDA…LRGFLIDTLE (125 aa). Residue C95 is the S-selanylcysteine intermediate of the active site.

Belongs to the SelU family. In terms of assembly, monomer.

The catalysed reaction is 5-methylaminomethyl-2-thiouridine(34) in tRNA + selenophosphate + (2E)-geranyl diphosphate + H2O + H(+) = 5-methylaminomethyl-2-selenouridine(34) in tRNA + (2E)-thiogeraniol + phosphate + diphosphate. It carries out the reaction 5-methylaminomethyl-2-thiouridine(34) in tRNA + (2E)-geranyl diphosphate = 5-methylaminomethyl-S-(2E)-geranyl-thiouridine(34) in tRNA + diphosphate. It catalyses the reaction 5-methylaminomethyl-S-(2E)-geranyl-thiouridine(34) in tRNA + selenophosphate + H(+) = 5-methylaminomethyl-2-(Se-phospho)selenouridine(34) in tRNA + (2E)-thiogeraniol. The enzyme catalyses 5-methylaminomethyl-2-(Se-phospho)selenouridine(34) in tRNA + H2O = 5-methylaminomethyl-2-selenouridine(34) in tRNA + phosphate. Its function is as follows. Involved in the post-transcriptional modification of the uridine at the wobble position (U34) of tRNA(Lys), tRNA(Glu) and tRNA(Gln). Catalyzes the conversion of 2-thiouridine (S2U-RNA) to 2-selenouridine (Se2U-RNA). Acts in a two-step process involving geranylation of 2-thiouridine (S2U) to S-geranyl-2-thiouridine (geS2U) and subsequent selenation of the latter derivative to 2-selenouridine (Se2U) in the tRNA chain. The sequence is that of tRNA 2-selenouridine synthase from Pseudomonas fluorescens (strain Pf0-1).